Here is a 354-residue protein sequence, read N- to C-terminus: Sulfate/thiosulfate import ATP-binding protein CysA (354 aa).

Residues 3-237 (IEVRGLSKRF…PATPFVYGFL (235 aa)) form the ABC transporter domain. Residue 35 to 42 (GPSGCGKT) coordinates ATP.

This sequence belongs to the ABC transporter superfamily. Sulfate/tungstate importer (TC 3.A.1.6) family. As to quaternary structure, the complex is composed of two ATP-binding proteins (CysA), two transmembrane proteins (CysT and CysW) and a solute-binding protein (CysP).

It is found in the cell inner membrane. The catalysed reaction is sulfate(out) + ATP + H2O = sulfate(in) + ADP + phosphate + H(+). It catalyses the reaction thiosulfate(out) + ATP + H2O = thiosulfate(in) + ADP + phosphate + H(+). Its function is as follows. Part of the ABC transporter complex CysAWTP involved in sulfate/thiosulfate import. Responsible for energy coupling to the transport system. This chain is Sulfate/thiosulfate import ATP-binding protein CysA, found in Bordetella bronchiseptica (strain ATCC BAA-588 / NCTC 13252 / RB50) (Alcaligenes bronchisepticus).